The sequence spans 518 residues: Putative cysteine ligase BshC (518 aa).

Residues 404-474 are a coiled coil; the sequence is AAASAERLAA…RARQLTRLKR (71 aa).

Belongs to the BshC family.

The protein is Putative cysteine ligase BshC of Deinococcus geothermalis (strain DSM 11300 / CIP 105573 / AG-3a).